The primary structure comprises 363 residues: NAD(P)H-quinone oxidoreductase subunit 1, chloroplastic (363 aa).

7 helical membrane passes run F30 to L50, I104 to L124, I129 to G149, Y248 to S268, L269 to F289, V300 to I320, and L336 to T356.

Belongs to the complex I subunit 1 family. In terms of assembly, NDH is composed of at least 16 different subunits, 5 of which are encoded in the nucleus.

The protein localises to the plastid. It is found in the chloroplast thylakoid membrane. The enzyme catalyses a plastoquinone + NADH + (n+1) H(+)(in) = a plastoquinol + NAD(+) + n H(+)(out). It catalyses the reaction a plastoquinone + NADPH + (n+1) H(+)(in) = a plastoquinol + NADP(+) + n H(+)(out). Its function is as follows. NDH shuttles electrons from NAD(P)H:plastoquinone, via FMN and iron-sulfur (Fe-S) centers, to quinones in the photosynthetic chain and possibly in a chloroplast respiratory chain. The immediate electron acceptor for the enzyme in this species is believed to be plastoquinone. Couples the redox reaction to proton translocation, and thus conserves the redox energy in a proton gradient. This is NAD(P)H-quinone oxidoreductase subunit 1, chloroplastic from Morus indica (Mulberry).